The chain runs to 179 residues: UPF0302 protein EF_1554 (179 aa).

Belongs to the UPF0302 family.

The sequence is that of UPF0302 protein EF_1554 from Enterococcus faecalis (strain ATCC 700802 / V583).